Reading from the N-terminus, the 129-residue chain is Large ribosomal subunit protein uL22 (129 aa).

This sequence belongs to the universal ribosomal protein uL22 family. Part of the 50S ribosomal subunit.

In terms of biological role, this protein binds specifically to 23S rRNA; its binding is stimulated by other ribosomal proteins, e.g. L4, L17, and L20. It is important during the early stages of 50S assembly. It makes multiple contacts with different domains of the 23S rRNA in the assembled 50S subunit and ribosome. The globular domain of the protein is located near the polypeptide exit tunnel on the outside of the subunit, while an extended beta-hairpin is found that lines the wall of the exit tunnel in the center of the 70S ribosome. The protein is Large ribosomal subunit protein uL22 of Onion yellows phytoplasma (strain OY-M).